The sequence spans 242 residues: MTEIFSTLFGQNDAQPPSGPAALGFAPGKPPPSMPPNQAPIAAQMPGQLGDDGPLLRKPGAMNEPFYLLRELPVGNDLTGNTNLITHYNLEHAYNKFCGKKVKEKLSNFLPELPGMIDCPGVQDGSSLRSLIEKPPVCGNSFSPLTGALLTGFRLHTGPLPEQYRLMHIQPPKKKSKHKHRHHHPQDPLPLETRTDPTKKKKKKDNEPERRKKKKDKKKKKNRHSPDHPGVTGSQPNSNSLR.

Polar residues predominate over residues M1–Q15. Disordered stretches follow at residues M1–S33 and P171–R242. Positions P171–H184 are enriched in basic residues. Residues T193–R210 show a composition bias toward basic and acidic residues. A compositionally biased stretch (basic residues) spans R211–R223. The segment covering T232–R242 has biased composition (polar residues).

This sequence belongs to the Mediator complex subunit 19 family. As to quaternary structure, component of the Mediator complex.

It is found in the nucleus. Its function is as follows. Component of the Mediator complex, a coactivator involved in the regulated transcription of nearly all RNA polymerase II-dependent genes. Mediator functions as a bridge to convey information from gene-specific regulatory proteins to the basal RNA polymerase II transcription machinery. Mediator is recruited to promoters by direct interactions with regulatory proteins and serves as a scaffold for the assembly of a functional preinitiation complex with RNA polymerase II and the general transcription factors. This chain is Mediator of RNA polymerase II transcription subunit 19-A (med19a), found in Danio rerio (Zebrafish).